Here is a 297-residue protein sequence, read N- to C-terminus: N-acetylneuraminate lyase (297 aa).

Serine 47 and threonine 48 together coordinate aceneuramate. Tyrosine 137 serves as the catalytic Proton donor. The Schiff-base intermediate with substrate role is filled by lysine 165. Threonine 167, glycine 189, aspartate 191, glutamate 192, and serine 208 together coordinate aceneuramate.

It belongs to the DapA family. NanA subfamily. In terms of assembly, homotetramer.

The protein localises to the cytoplasm. The enzyme catalyses aceneuramate = aldehydo-N-acetyl-D-mannosamine + pyruvate. It participates in amino-sugar metabolism; N-acetylneuraminate degradation; D-fructose 6-phosphate from N-acetylneuraminate: step 1/5. Catalyzes the reversible aldol cleavage of N-acetylneuraminic acid (sialic acid; Neu5Ac) to form pyruvate and N-acetylmannosamine (ManNAc) via a Schiff base intermediate. This is N-acetylneuraminate lyase from Shigella boydii serotype 4 (strain Sb227).